The following is a 201-amino-acid chain: Translation initiation factor IF-3 (201 aa).

This sequence belongs to the IF-3 family. Monomer.

It is found in the cytoplasm. Its function is as follows. IF-3 binds to the 30S ribosomal subunit and shifts the equilibrium between 70S ribosomes and their 50S and 30S subunits in favor of the free subunits, thus enhancing the availability of 30S subunits on which protein synthesis initiation begins. This is Translation initiation factor IF-3 from Prochlorococcus marinus (strain SARG / CCMP1375 / SS120).